The primary structure comprises 651 residues: Cytoplasmic tyrosine-protein kinase BMX (651 aa).

Positions 4–111 constitute a PH domain; that stretch reads KSILEELLLK…WLKALQKEIR (108 aa). Residues 113–149 form a Btk-type zinc finger; it reads NPHLLIKYHSGFFVDGKFLCCQQSCKAAPGCTLWEAY. Positions 121, 132, 133, and 143 each coordinate Zn(2+). Residues 272–368 enclose the SH2 domain; that stretch reads WFAGNISRSQ…GMITRLRHPV (97 aa). A Protein kinase domain is found at 393-646; the sequence is ITLLKELGNG…QLLSAIEPLR (254 aa). ATP contacts are provided by residues 399–407 and K421; that span reads LGNGQFGVV. D512 functions as the Proton acceptor in the catalytic mechanism. Y542 carries the phosphotyrosine; by SRC and autocatalysis modification.

This sequence belongs to the protein kinase superfamily. Tyr protein kinase family. TEC subfamily. As to quaternary structure, interacts with BCAR1, CAV1, MYD88, PTK2/FAK1, RUFY1, RUFY2, STAT3, TIRAP and TNFRSF1B. Zn(2+) serves as cofactor. Post-translationally, phosphorylated in response to protein I/II and to LPS. Phosphorylation at Tyr-542 by SRC and by autocatalysis leads to activation and is required for STAT3 phosphorylation by BMX. As to expression, specifically expressed in the endocardium of the developing heart as well as in the endocardium of the left ventricle and in the endothelium of large arteries in adult mice.

The protein localises to the cytoplasm. It carries out the reaction L-tyrosyl-[protein] + ATP = O-phospho-L-tyrosyl-[protein] + ADP + H(+). Its activity is regulated as follows. TEK and vascular endothelial growth factor receptor 1 (FLT1) stimulate BMX tyrosine kinase activity. Activated by integrins through the mediation of PTK2/FAK1. Activated by TNF through the mediation of TNFRSF1B. Its function is as follows. Non-receptor tyrosine kinase that plays central but diverse modulatory roles in various signaling processes involved in the regulation of actin reorganization, cell migration, cell proliferation and survival, cell adhesion, and apoptosis. Participates in signal transduction stimulated by growth factor receptors, cytokine receptors, G-protein coupled receptors, antigen receptors and integrins. Induces tyrosine phosphorylation of BCAR1 in response to integrin regulation. Activation of BMX by integrins is mediated by PTK2/FAK1, a key mediator of integrin signaling events leading to the regulation of actin cytoskeleton and cell motility. Plays a critical role in TNF-induced angiogenesis, and implicated in the signaling of TEK and FLT1 receptors, 2 important receptor families essential for angiogenesis. Required for the phosphorylation and activation of STAT3, a transcription factor involved in cell differentiation. Also involved in interleukin-6 (IL6) induced differentiation. Also plays a role in programming adaptive cytoprotection against extracellular stress in different cell systems, salivary epithelial cells, brain endothelial cells, and dermal fibroblasts. May be involved in regulation of endocytosis through its interaction with an endosomal protein RUFY1. May also play a role in the growth and differentiation of hematopoietic cells; as well as in signal transduction in endocardial and arterial endothelial cells. The chain is Cytoplasmic tyrosine-protein kinase BMX (Bmx) from Mus musculus (Mouse).